The primary structure comprises 654 residues: MAKSEKHKLAQTLIDSINEIASISDSVTPMKKHCANLSRRLSLLLPMLEEIRDNQESSSEVVNALLSVKQSLLHAKDLLSFVSHVSKIYLVLERDQVMVKFQKVTSLLEQALSIIPYENLEISDELKEQVELVLVQLRRSLGKRGGDVYDDELYKDVLSLYSGRGSVMESDMVRRVAEKLQLMTITDLTQESLALLDMVSSSGGDDPGESFEKMSMVLKKIKDFVQTYNPNLDDAPLRLKSSLPKSRDDDRDMLIPPEEFRCPISLELMTDPVIVSSGQTYERECIKKWLEGGHLTCPKTQETLTSDIMTPNYVLRSLIAQWCESNGIEPPKRPNISQPSSKASSSSSAPDDEHNKIEELLLKLTSQQPEDRRSAAGEIRLLAKQNNHNRVAIAASGAIPLLVNLLTISNDSRTQEHAVTSILNLSICQENKGKIVYSSGAVPGIVHVLQKGSMEARENAAATLFSLSVIDENKVTIGAAGAIPPLVTLLSEGSQRGKKDAATALFNLCIFQGNKGKAVRAGLVPVLMRLLTEPESGMVDESLSILAILSSHPDGKSEVGAADAVPVLVDFIRSGSPRNKENSAAVLVHLCSWNQQHLIEAQKLGIMDLLIEMAENGTDRGKRKAAQLLNRFSRFNDQQKQHSGLGLEDQISLI.

Residues isoleucine 255 to glutamate 329 enclose the U-box domain. The segment at glutamate 329 to aspartate 352 is disordered. Residues serine 337 to alanine 349 show a composition bias toward low complexity. 5 ARM repeats span residues asparagine 387–isoleucine 427, glutamate 430–valine 469, aspartate 471–isoleucine 510, glutamine 512–serine 551, and proline 553–serine 592.

The enzyme catalyses S-ubiquitinyl-[E2 ubiquitin-conjugating enzyme]-L-cysteine + [acceptor protein]-L-lysine = [E2 ubiquitin-conjugating enzyme]-L-cysteine + N(6)-ubiquitinyl-[acceptor protein]-L-lysine.. The protein operates within protein modification; protein ubiquitination. Functionally, functions as an E3 ubiquitin ligase. The protein is U-box domain-containing protein 12 (PUB12) of Arabidopsis thaliana (Mouse-ear cress).